Here is a 419-residue protein sequence, read N- to C-terminus: UDP-N-acetylglucosamine 1-carboxyvinyltransferase 2 (419 aa).

24–25 is a binding site for phosphoenolpyruvate; it reads KN. Residue R94 participates in UDP-N-acetyl-alpha-D-glucosamine binding. Catalysis depends on C118, which acts as the Proton donor. C118 bears the 2-(S-cysteinyl)pyruvic acid O-phosphothioketal mark. Residues 123-127, D307, and I329 each bind UDP-N-acetyl-alpha-D-glucosamine; that span reads RPIDQ.

The protein belongs to the EPSP synthase family. MurA subfamily.

It localises to the cytoplasm. The enzyme catalyses phosphoenolpyruvate + UDP-N-acetyl-alpha-D-glucosamine = UDP-N-acetyl-3-O-(1-carboxyvinyl)-alpha-D-glucosamine + phosphate. It functions in the pathway cell wall biogenesis; peptidoglycan biosynthesis. Functionally, cell wall formation. Adds enolpyruvyl to UDP-N-acetylglucosamine. The protein is UDP-N-acetylglucosamine 1-carboxyvinyltransferase 2 of Staphylococcus epidermidis (strain ATCC 12228 / FDA PCI 1200).